The sequence spans 411 residues: Creatinase (411 aa).

Residue His-240 is part of the active site.

It belongs to the peptidase M24 family. Creatinase subfamily. As to quaternary structure, homodimer.

It catalyses the reaction creatine + H2O = sarcosine + urea. This is Creatinase from Bacillus sp. (strain B-0618).